A 463-amino-acid chain; its full sequence is Bifunctional protein HldE (463 aa).

The ribokinase stretch occupies residues 1-315; it reads MRKILVIGDL…LILNQTHPKI (315 aa). 191–194 contributes to the ATP binding site; the sequence is NRFE. Residue D260 is part of the active site. The interval 334 to 463 is cytidylyltransferase; that stretch reads FTNGCFDILH…IEKIKRAYND (130 aa).

The protein in the N-terminal section; belongs to the carbohydrate kinase PfkB family. This sequence in the C-terminal section; belongs to the cytidylyltransferase family. Homodimer.

It carries out the reaction D-glycero-beta-D-manno-heptose 7-phosphate + ATP = D-glycero-beta-D-manno-heptose 1,7-bisphosphate + ADP + H(+). It catalyses the reaction D-glycero-beta-D-manno-heptose 1-phosphate + ATP + H(+) = ADP-D-glycero-beta-D-manno-heptose + diphosphate. It participates in nucleotide-sugar biosynthesis; ADP-L-glycero-beta-D-manno-heptose biosynthesis; ADP-L-glycero-beta-D-manno-heptose from D-glycero-beta-D-manno-heptose 7-phosphate: step 1/4. It functions in the pathway nucleotide-sugar biosynthesis; ADP-L-glycero-beta-D-manno-heptose biosynthesis; ADP-L-glycero-beta-D-manno-heptose from D-glycero-beta-D-manno-heptose 7-phosphate: step 3/4. Catalyzes the phosphorylation of D-glycero-D-manno-heptose 7-phosphate at the C-1 position to selectively form D-glycero-beta-D-manno-heptose-1,7-bisphosphate. In terms of biological role, catalyzes the ADP transfer from ATP to D-glycero-beta-D-manno-heptose 1-phosphate, yielding ADP-D-glycero-beta-D-manno-heptose. The polypeptide is Bifunctional protein HldE (Helicobacter acinonychis (strain Sheeba)).